Here is a 426-residue protein sequence, read N- to C-terminus: Divalent metal cation transporter MntH (426 aa).

The next 10 membrane-spanning stretches (helical) occupy residues 31-51 (WYLL…GNVA), 58-78 (AQFG…AGLV), 134-156 (ILFR…LLLM), 169-189 (VITG…FVAT), 208-228 (SVLL…VYLH), 256-276 (VILA…VAAI), 298-318 (LGAT…LASA), 337-357 (IPML…LALG), 363-383 (ALVL…LPLV), and 402-422 (TVLG…LIYL).

It belongs to the NRAMP family.

It localises to the cell membrane. H(+)-stimulated, divalent metal cation uptake system. In Mycobacterium leprae (strain TN), this protein is Divalent metal cation transporter MntH.